The sequence spans 1237 residues: MPPAYQSAFHKIISRDKGVFEGHNFLVSVDTINWIHVNTLTITEQGQLFSSDSKDNHYLLLQSLQSCFIQIYPDSNISGSGKSSISQPPPTTSTRRNLLRKSSNLNSSDQSHSKSSEDNEHQPPAILIKTFDNDKLYIRIPSKANFGNLLSCLMVWQNLKPQGLAKKWYCENKVIEGFNPNAPIYELLVCRFKIYGPLPNKYKNLNIVPGPKAPVYQQKMDDFKANFDNSYIITPQISSDNHNSINEGWFYAMGALNSHGILNFISELDGTLLYSIDIKQILSSEIREMHNSIFNSSNILFIGQLKELRYNNVIRTLSTLTPDQLLTPFLTRDGKIIPNNQRILIEFPLHIDLEDWFVGLNYFAKREYIGSFDNESKLIHNVEHPQLYDFSKANFRVSKKMSIDIIEAKFENTETNKSGKIYAEVRMWGFPWSRTAIVNHTNNPFWKEEFSTDLPISTQMVHILIKKCSFNDSSYSTGDKLIGTVYVTPDILTKQIKTTSTIMTSSESSQAIQMNTVPLSSMASNSNAGLDIVRLTINDPNNIPIGKLLLEVHLQEYHILSPSVFKPLEKMLVNAPMKDLIKFCNENVPSSDFERVSLVLLDIFQSLEVEDDWFKSLMEVELVNVDIMTRKNYHQRNSQDQAVSNSKTQQQSSHNNVFNTLFRGSSIFSKSLEKYNLRIGQEYLEKVFGDFFAKISNEKKNCEVDPRYVRIQERALRKGKSIHEATGLENGQNEDVSDDDDDDDDNSSDDDADYNAEKERERNERIKQMVEENFQNLYGYVEEIWYKIYITSNDLPDQIKLQLKNFRTKVELVCDPEDKVTSLNCLSAFIFLRFFCPAILNPKLFYLAKNHQTGSTQRTLTLIAKILLNFANRQEFSPHKEPHLVRMNVFLRKHTPEIYDYFDKLTGRKNDFNEKILDLSHEVKRFDLGLDKTSNELPTTPYLIDKYLRLTEIVHLLDYSKYVKNIGNNNNGSMSNLGTPVNSPSRDMEREQDRSRSRSQSGTPDLDPILNLSDLKLNYENKYQIGSLEFEKSEFLELTGDNETEGFIKSLCKGNEEIFSFINSNITLKDIQKQSTKIMNKIQELEIYLENYEFPNNYKDQIIWDSFTDDIMNKCWLDTSRNCLIYSDHVPSSNNQYKKLVDHAFSGLKLKFNDHQKLNGNSTMNSLINNGGMGNRNGHDVNGHNNNNNNNNNNTGDGYNETDRNQRLSSTFSTISIGSAIKPNTSKNPFKKWLRKN.

The segment covering 79–110 has biased composition (low complexity); that stretch reads GSGKSSISQPPPTTSTRRNLLRKSSNLNSSDQ. A disordered region spans residues 79 to 124; that stretch reads GSGKSSISQPPPTTSTRRNLLRKSSNLNSSDQSHSKSSEDNEHQPP. Residues 111-121 are compositionally biased toward basic and acidic residues; that stretch reads SHSKSSEDNEH. The region spanning 381-503 is the C2 domain; sequence NVEHPQLYDF…KQIKTTSTIM (123 aa). The region spanning 637 to 905 is the Ras-GAP domain; sequence NSQDQAVSNS…PEIYDYFDKL (269 aa). Disordered stretches follow at residues 721–762 and 969–1007; these read SIHE…ERER and NNNG…PDLD. The segment covering 735 to 754 has biased composition (acidic residues); the sequence is DVSDDDDDDDDNSSDDDADY. The span at 986-996 shows a compositional bias: basic and acidic residues; that stretch reads RDMEREQDRSR. The stretch at 1065 to 1093 forms a coiled coil; the sequence is NITLKDIQKQSTKIMNKIQELEIYLENYE. Positions 1170–1204 are disordered; sequence NGGMGNRNGHDVNGHNNNNNNNNNNTGDGYNETDR. A compositionally biased stretch (low complexity) spans 1183–1199; it reads GHNNNNNNNNNNTGDGY.

It is found in the cytoplasm. The protein localises to the cell cortex. Its subcellular location is the cell tip. It localises to the cell septum. Its function is as follows. GTPase activating protein (GAP) for RSR1 which is involved in the polarization of yeast and hyphal cells. Directs the site of new daughter cell growth in yeast and hyphal cells. Important for hyphae to maintain linear growth and necessary for hyphal responses to directional cues in the environment (tropisms). Required for correct localization of the septin rings and stabilization of the polarisome at hyphal tips. Involved in cell adhesion. The polypeptide is GTPase activating protein BUD2 (BUD2) (Candida albicans (strain SC5314 / ATCC MYA-2876) (Yeast)).